The chain runs to 143 residues: FAD synthase (143 aa).

ATP contacts are provided by residues 13 to 14 (TF), 18 to 21 (HPGH), and Asp-96.

It belongs to the archaeal FAD synthase family. In terms of assembly, homodimer. A divalent metal cation serves as cofactor.

It carries out the reaction FMN + ATP + H(+) = FAD + diphosphate. The protein operates within cofactor biosynthesis; FAD biosynthesis; FAD from FMN: step 1/1. In terms of biological role, catalyzes the transfer of the AMP portion of ATP to flavin mononucleotide (FMN) to produce flavin adenine dinucleotide (FAD) coenzyme. This Methanothrix thermoacetophila (strain DSM 6194 / JCM 14653 / NBRC 101360 / PT) (Methanosaeta thermophila) protein is FAD synthase.